The following is a 396-amino-acid chain: S-adenosylmethionine synthase 3 (396 aa).

Residue glutamate 12 coordinates Mg(2+). ATP is bound at residue histidine 18. Glutamate 46 is a binding site for K(+). Residues glutamate 59 and glutamine 102 each contribute to the L-methionine site. Residues 170–172 (DGK), 238–241 (SGRF), aspartate 249, 255–256 (RK), alanine 272, lysine 276, and lysine 280 contribute to the ATP site. Aspartate 249 is an L-methionine binding site. Lysine 280 is an L-methionine binding site.

It belongs to the AdoMet synthase family. Homotetramer. The cofactor is Mn(2+). Mg(2+) is required as a cofactor. It depends on Co(2+) as a cofactor. K(+) serves as cofactor.

The protein localises to the cytoplasm. The catalysed reaction is L-methionine + ATP + H2O = S-adenosyl-L-methionine + phosphate + diphosphate. Its pathway is amino-acid biosynthesis; S-adenosyl-L-methionine biosynthesis; S-adenosyl-L-methionine from L-methionine: step 1/1. Its function is as follows. Catalyzes the formation of S-adenosylmethionine from methionine and ATP. The reaction comprises two steps that are both catalyzed by the same enzyme: formation of S-adenosylmethionine (AdoMet) and triphosphate, and subsequent hydrolysis of the triphosphate. The protein is S-adenosylmethionine synthase 3 (METK3) of Oryza sativa subsp. japonica (Rice).